The chain runs to 240 residues: 1-(5-phosphoribosyl)-5-[(5-phosphoribosylamino)methylideneamino] imidazole-4-carboxamide isomerase (240 aa).

The active-site Proton acceptor is the Asp8. Asp129 acts as the Proton donor in catalysis.

It belongs to the HisA/HisF family.

The protein localises to the cytoplasm. The catalysed reaction is 1-(5-phospho-beta-D-ribosyl)-5-[(5-phospho-beta-D-ribosylamino)methylideneamino]imidazole-4-carboxamide = 5-[(5-phospho-1-deoxy-D-ribulos-1-ylimino)methylamino]-1-(5-phospho-beta-D-ribosyl)imidazole-4-carboxamide. It participates in amino-acid biosynthesis; L-histidine biosynthesis; L-histidine from 5-phospho-alpha-D-ribose 1-diphosphate: step 4/9. The protein is 1-(5-phosphoribosyl)-5-[(5-phosphoribosylamino)methylideneamino] imidazole-4-carboxamide isomerase of Clostridium beijerinckii (strain ATCC 51743 / NCIMB 8052) (Clostridium acetobutylicum).